The following is a 400-amino-acid chain: Probable succinyl-diaminopimelate desuccinylase (400 aa).

Position 72 (His72) interacts with Zn(2+). Residue Asp74 is part of the active site. Asp105 contributes to the Zn(2+) binding site. Glu139 acts as the Proton acceptor in catalysis. Zn(2+) is bound by residues Glu140, Glu165, and His378.

The protein belongs to the peptidase M20A family. Zn(2+) serves as cofactor. It depends on Co(2+) as a cofactor.

The enzyme catalyses N-succinyl-(2S,6S)-2,6-diaminopimelate + H2O = (2S,6S)-2,6-diaminopimelate + succinate. It participates in amino-acid biosynthesis; L-lysine biosynthesis via DAP pathway; LL-2,6-diaminopimelate from (S)-tetrahydrodipicolinate (succinylase route): step 3/3. This Staphylococcus aureus (strain Mu50 / ATCC 700699) protein is Probable succinyl-diaminopimelate desuccinylase (dapE).